The sequence spans 657 residues: Protein PSK SIMULATOR 1 (657 aa).

4 stretches are compositionally biased toward polar residues: residues 1 to 15 (MGGL…NNAP), 26 to 39 (HLNN…SHSG), 62 to 76 (ESFS…SHPQ), and 540 to 556 (RSPN…SHNP). Disordered stretches follow at residues 1–80 (MGGL…NIED) and 534–559 (PVKS…PSMG). Residue Gly2 is the site of N-myristoyl glycine attachment.

Its subcellular location is the nucleus. In terms of biological role, promotes seedling growth probably via the regulation of phytosulfokine (PSK) signaling; PSK are peptide phytohormones acting as growth factors. Together with PSI2 and PSI3, required during vegetative growth and reproduction. May also have a function in carbohydrate metabolism. In Arabidopsis thaliana (Mouse-ear cress), this protein is Protein PSK SIMULATOR 1.